The sequence spans 322 residues: Short chain dehydrogenase AOL_s00215g274 (322 aa).

Residues 47 to 48 (AV), 104 to 106 (IAV), 197 to 201 (YNVSK), and 230 to 232 (VAT) each bind NAD(+). Residue Y197 is the Proton acceptor of the active site.

This sequence belongs to the short-chain dehydrogenases/reductases (SDR) family.

Its pathway is secondary metabolite biosynthesis; terpenoid biosynthesis. Its function is as follows. Short chain dehydrogenase; part of the gene cluster that mediates the biosynthesis of sesquiterpenyl epoxy-cyclohexenoids (SECs) such as anthrobotrisins and arthrosporols, metabolites that possess a novel hybrid carbon skeleton consisting of a polyketide-derived epoxycyclohexenol combined with a terpenoid-derived monocyclic sesquiterpenol substructure (PKS-PTS hybrid). The SEC pathway plays an important role for fungal soil colonization via decreasing fungal nematode-capturing ability. Within the pathway, the cytochrome P450 monooxygenase AOL_s00215g274 is involved in specific regional ketone reductions at C-4 of farnesyl epoxy-quinone. The pathway begins with the biosynthesis of 6-methylsalicylic acid (6-MSA), the first precursor of the polyketide-derived epoxycyclohexenol in arthrosporols, by the polyketide synthase (PKS) AOL_s00215g283 via condensation of 1 acetate and 3 malonate units. The 6-methylsalicylic acid decarboxylase AOL_s00215g281 then catalyzes the decarboxylation of 6-methylsalicylic acid to yield m-cresol. The cytochrome P450 monooxygenase AOL_s00215g282 further oxidizes m-cresol to yield toluquinol. With the assistance of the oxidoreductase AOL_s00215g277, the polyprenyl transferase AOL_s00215g276 catalyzes the farnesylation of toluquinol to produce farnesyl hydroquinone, the hybrid precursor for biosynthesis of SECs. Farnesyl hydroquinone undergoes epoxidation and then subsequent dehydrogenation to form farnesyl epoxy-quinone, the first and simplest SEC. The cytochrome P450 monooxygenase AOL_s00215g278 and the FAD-dependent monooxygenase AOL_s00215g279 might be involved in the oxygenation of the phenol moiety, most likely in the epoxy formation. The cytochrome P450 monooxygenases AOL_s00215g274 and AOL_s00215g280 are involved in specific regional ketone reductions at respectively C-4 and C-1 of farnesyl epoxy-quinone PubMed:33823587. This is Short chain dehydrogenase AOL_s00215g274 from Arthrobotrys oligospora (strain ATCC 24927 / CBS 115.81 / DSM 1491) (Nematode-trapping fungus).